The chain runs to 145 residues: Basic phospholipase A2 cPt09 (145 aa).

The N-terminal stretch at 1-21 is a signal peptide; sequence MYPAHLLVLLAVCVSLLGAST. Residues 22–27 constitute a propeptide that is removed on maturation; the sequence is IPPLPL. 7 disulfide bridges follow: Cys38–Cys98, Cys54–Cys144, Cys56–Cys72, Cys71–Cys125, Cys78–Cys118, Cys87–Cys111, and Cys105–Cys116. Residues Tyr55, Gly57, and Gly59 each contribute to the Ca(2+) site. Residue His75 is part of the active site. Ca(2+) is bound at residue Asp76. Asp119 is an active-site residue.

Belongs to the phospholipase A2 family. Group I subfamily. D49 sub-subfamily. The cofactor is Ca(2+). Expressed by the venom gland.

The protein resides in the secreted. It carries out the reaction a 1,2-diacyl-sn-glycero-3-phosphocholine + H2O = a 1-acyl-sn-glycero-3-phosphocholine + a fatty acid + H(+). PLA2 catalyzes the calcium-dependent hydrolysis of the 2-acyl groups in 3-sn-phosphoglycerides. The protein is Basic phospholipase A2 cPt09 of Laticauda semifasciata (Black-banded sea krait).